A 588-amino-acid polypeptide reads, in one-letter code: Aspartate--tRNA ligase (588 aa).

Glu-177 is an L-aspartate binding site. The tract at residues 201 to 204 is aspartate; that stretch reads QLFK. Arg-223 is a binding site for L-aspartate. ATP is bound by residues 223–225 and Gln-232; that span reads RDE. His-451 contributes to the L-aspartate binding site. Position 485 (Glu-485) interacts with ATP. Arg-492 serves as a coordination point for L-aspartate. 537–540 contacts ATP; it reads GLDR.

The protein belongs to the class-II aminoacyl-tRNA synthetase family. Type 1 subfamily. In terms of assembly, homodimer.

The protein resides in the cytoplasm. The enzyme catalyses tRNA(Asp) + L-aspartate + ATP = L-aspartyl-tRNA(Asp) + AMP + diphosphate. Its function is as follows. Catalyzes the attachment of L-aspartate to tRNA(Asp) in a two-step reaction: L-aspartate is first activated by ATP to form Asp-AMP and then transferred to the acceptor end of tRNA(Asp). The polypeptide is Aspartate--tRNA ligase (Staphylococcus aureus (strain MRSA252)).